The sequence spans 486 residues: Ribulose bisphosphate carboxylase large chain (486 aa).

The substrate site is built by N125 and T175. K177 (proton acceptor) is an active-site residue. A substrate-binding site is contributed by K179. K203, D205, and E206 together coordinate Mg(2+). K203 carries the N6-carboxylysine modification. Residue H295 is the Proton acceptor of the active site. 3 residues coordinate substrate: R296, H328, and S380.

The protein belongs to the RuBisCO large chain family. Type I subfamily. Heterohexadecamer of 8 large chains and 8 small chains. Mg(2+) is required as a cofactor.

The catalysed reaction is 2 (2R)-3-phosphoglycerate + 2 H(+) = D-ribulose 1,5-bisphosphate + CO2 + H2O. The enzyme catalyses D-ribulose 1,5-bisphosphate + O2 = 2-phosphoglycolate + (2R)-3-phosphoglycerate + 2 H(+). Its function is as follows. RuBisCO catalyzes two reactions: the carboxylation of D-ribulose 1,5-bisphosphate, the primary event in carbon dioxide fixation, as well as the oxidative fragmentation of the pentose substrate. Both reactions occur simultaneously and in competition at the same active site. In Aurantimonas manganoxydans (strain ATCC BAA-1229 / DSM 21871 / SI85-9A1), this protein is Ribulose bisphosphate carboxylase large chain.